A 237-amino-acid polypeptide reads, in one-letter code: Concanavalin-A (237 aa).

Glutamate 8 and aspartate 10 together coordinate Mn(2+). Positions 10, 12, 14, and 19 each coordinate Ca(2+). Residue asparagine 14 participates in a carbohydrate binding. Mn(2+) contacts are provided by aspartate 19 and histidine 24. A carbohydrate-binding positions include 98–100, aspartate 208, and arginine 228; that span reads GLY.

It belongs to the leguminous lectin family. Homotetramer. Concanavalin A-like lectins of the Diocleinae subtribe undergo proteolytic processing referred to as circular permutation. The propeptide is split into an N-terminal and a C-terminal part, the gamma and beta chain, respectively. These are then religated in beta-gamma order to form the mature alpha chain. The beta and gamma chains can often be detected in cell extracts. Residues 1-118 of the mature chain, as displayed here, probably constitute the beta chain in the propeptide, residues 119-237 the gamma chain.

Glucose/D-mannose specific lectin. In Canavalia cathartica (Jackbean), this protein is Concanavalin-A.